The primary structure comprises 499 residues: Probable cytosol aminopeptidase (499 aa).

Residues Lys271 and Asp276 each contribute to the Mn(2+) site. Lys283 is an active-site residue. Asp294, Asp353, and Glu355 together coordinate Mn(2+). Residue Arg357 is part of the active site.

The protein belongs to the peptidase M17 family. The cofactor is Mn(2+).

The protein localises to the cytoplasm. The catalysed reaction is Release of an N-terminal amino acid, Xaa-|-Yaa-, in which Xaa is preferably Leu, but may be other amino acids including Pro although not Arg or Lys, and Yaa may be Pro. Amino acid amides and methyl esters are also readily hydrolyzed, but rates on arylamides are exceedingly low.. The enzyme catalyses Release of an N-terminal amino acid, preferentially leucine, but not glutamic or aspartic acids.. In terms of biological role, presumably involved in the processing and regular turnover of intracellular proteins. Catalyzes the removal of unsubstituted N-terminal amino acids from various peptides. The polypeptide is Probable cytosol aminopeptidase (Bordetella bronchiseptica (strain ATCC BAA-588 / NCTC 13252 / RB50) (Alcaligenes bronchisepticus)).